The chain runs to 292 residues: Protease HtpX homolog (292 aa).

2 consecutive transmembrane segments (helical) span residues 4 to 24 (ILLFVLTNLAVVLVLGVVASL) and 39 to 59 (GALLGFALVMGFGGAFISLLI). His-144 contributes to the Zn(2+) binding site. The active site involves Glu-145. His-148 lines the Zn(2+) pocket. Transmembrane regions (helical) follow at residues 159-179 (LIQGVMNTFVVFLSRVIGYAV) and 199-219 (VTTIVLDIALGFVAAIIVAWF). Glu-224 serves as a coordination point for Zn(2+).

Belongs to the peptidase M48B family. It depends on Zn(2+) as a cofactor.

It is found in the cell inner membrane. In Verminephrobacter eiseniae (strain EF01-2), this protein is Protease HtpX homolog.